We begin with the raw amino-acid sequence, 244 residues long: MDQFSGGGGNWSMIPNVQAQGNFGTPTNHDQQLFLQQQQLQQQQQQQQQQQFHLQQQQQTQQQQQQFQPQQQQEMQQYQQFQQQQHFIQQQQFQQQQRLLQSPPLQPQSLQSPPPQQTMVHTPQSMMHTPQQQQQLVQTPVQTPQQHQSLASHFHLYPMVEKLADVIENGTRDQNSDALVNELNSHFDKCQQLLNSISGSLGSKTMTVDGQKRNVEESEQLLQQRRDLIVEYRKSIEEIVTMEH.

Residues 1-10 are compositionally biased toward gly residues; the sequence is MDQFSGGGGN. Disordered regions lie at residues 1-28 and 96-131; these read MDQF…TPTN and QQRL…HTPQ. The span at 13-28 shows a compositional bias: polar residues; sequence MIPNVQAQGNFGTPTN. 2 stretches are compositionally biased toward low complexity: residues 96–111 and 122–131; these read QQRL…QSLQ and TPQSMMHTPQ. Positions 212–239 form a coiled coil; it reads KRNVEESEQLLQQRRDLIVEYRKSIEEI.

This sequence belongs to the plant Mediator complex subunit 9 family. As to quaternary structure, component of the Mediator complex. Interacts with MEE14/CBP1.

It is found in the nucleus. Functionally, component of the Mediator complex, a coactivator involved in the regulated transcription of nearly all RNA polymerase II-dependent genes. Mediator functions as a bridge to convey information from gene-specific regulatory proteins to the basal RNA polymerase II transcription machinery. The Mediator complex, having a compact conformation in its free form, is recruited to promoters by direct interactions with regulatory proteins and serves for the assembly of a functional pre-initiation complex with RNA polymerase II and the general transcription factors. The chain is Mediator of RNA polymerase II transcription subunit 9 (MED9) from Arabidopsis thaliana (Mouse-ear cress).